The chain runs to 333 residues: Lipoyl synthase (333 aa).

The [4Fe-4S] cluster site is built by C56, C61, C67, C82, C86, C89, and S293. The Radical SAM core domain occupies 68 to 282 (WEDREATFLI…GRVGAELGFS (215 aa)). The tract at residues 301-333 (QQAMTARDQDRSEMSVPPESVSENSHGQRPSPW) is disordered. Over residues 314–325 (MSVPPESVSENS) the composition is skewed to low complexity.

Belongs to the radical SAM superfamily. Lipoyl synthase family. [4Fe-4S] cluster is required as a cofactor.

The protein localises to the cytoplasm. The enzyme catalyses [[Fe-S] cluster scaffold protein carrying a second [4Fe-4S](2+) cluster] + N(6)-octanoyl-L-lysyl-[protein] + 2 oxidized [2Fe-2S]-[ferredoxin] + 2 S-adenosyl-L-methionine + 4 H(+) = [[Fe-S] cluster scaffold protein] + N(6)-[(R)-dihydrolipoyl]-L-lysyl-[protein] + 4 Fe(3+) + 2 hydrogen sulfide + 2 5'-deoxyadenosine + 2 L-methionine + 2 reduced [2Fe-2S]-[ferredoxin]. Its pathway is protein modification; protein lipoylation via endogenous pathway; protein N(6)-(lipoyl)lysine from octanoyl-[acyl-carrier-protein]: step 2/2. Functionally, catalyzes the radical-mediated insertion of two sulfur atoms into the C-6 and C-8 positions of the octanoyl moiety bound to the lipoyl domains of lipoate-dependent enzymes, thereby converting the octanoylated domains into lipoylated derivatives. The polypeptide is Lipoyl synthase (Frankia casuarinae (strain DSM 45818 / CECT 9043 / HFP020203 / CcI3)).